The following is a 296-amino-acid chain: Immediate early response gene 5-like protein (296 aa).

This sequence belongs to the IER family.

This chain is Immediate early response gene 5-like protein (ier5l), found in Xenopus tropicalis (Western clawed frog).